The following is a 329-amino-acid chain: 4-hydroxythreonine-4-phosphate dehydrogenase (329 aa).

Residues H136 and T137 each contribute to the substrate site. A divalent metal cation is bound by residues H166, H211, and H266. 3 residues coordinate substrate: K274, N283, and R292.

This sequence belongs to the PdxA family. In terms of assembly, homodimer. Requires Zn(2+) as cofactor. It depends on Mg(2+) as a cofactor. Co(2+) serves as cofactor.

The protein localises to the cytoplasm. It carries out the reaction 4-(phosphooxy)-L-threonine + NAD(+) = 3-amino-2-oxopropyl phosphate + CO2 + NADH. The protein operates within cofactor biosynthesis; pyridoxine 5'-phosphate biosynthesis; pyridoxine 5'-phosphate from D-erythrose 4-phosphate: step 4/5. Functionally, catalyzes the NAD(P)-dependent oxidation of 4-(phosphooxy)-L-threonine (HTP) into 2-amino-3-oxo-4-(phosphooxy)butyric acid which spontaneously decarboxylates to form 3-amino-2-oxopropyl phosphate (AHAP). In Escherichia coli O6:H1 (strain CFT073 / ATCC 700928 / UPEC), this protein is 4-hydroxythreonine-4-phosphate dehydrogenase.